A 447-amino-acid polypeptide reads, in one-letter code: Tetratricopeptide repeat protein 23 (447 aa).

TPR repeat units lie at residues 45 to 78, 137 to 170, 186 to 219, and 356 to 389; these read LHLC…TRIC, IELF…SKEL, ARIR…VEIS, and AETY…QTLL.

Found Associated with the EvC complex composed of EFCAB7, IQCE, EVC2 and EVC.

The protein resides in the cell projection. Its subcellular location is the cilium. Participates positively in the ciliary Hedgehog (Hh) signaling. The sequence is that of Tetratricopeptide repeat protein 23 (TTC23) from Homo sapiens (Human).